We begin with the raw amino-acid sequence, 115 residues long: uncharacterized protein (115 aa).

The segment at 1–86 (RRPARSGGDG…LSSQLVRPSR (86 aa)) is disordered.

This is an uncharacterized protein from Homo sapiens (Human).